The following is an 801-amino-acid chain: Protein SDA1 homolog (801 aa).

4 disordered regions span residues 1 to 40 (MGKVSKSPGKGEKRIGKVGKKNGKSNAPTEGSNSGKASRF), 495 to 517 (RKDRGKPQEKDDEDEEYNGFARP), 536 to 647 (GEQG…SKNS), and 739 to 801 (DYKF…RKPQ). Positions 24–40 (KSNAPTEGSNSGKASRF) are enriched in polar residues. Acidic residues-rich tracts occupy residues 544–568 (DGTDSELDVSDVDTDDVDTDDDADE) and 583–633 (NDAE…EASE). 2 stretches are compositionally biased toward basic residues: residues 770–779 (NKIRGRNRQR) and 787–801 (SLRHYLMRQSGRKPQ).

Belongs to the SDA1 family.

Its subcellular location is the nucleus. In terms of biological role, required for 60S pre-ribosomal subunits export to the cytoplasm. Required for normal somatic gonad development and for regulation of germline development and proliferation. The protein is Protein SDA1 homolog (pro-3) of Caenorhabditis elegans.